We begin with the raw amino-acid sequence, 135 residues long: Histone H3 type 3 (135 aa).

The disordered stretch occupies residues 1–40 (MARTKQTARKSTGGKAPRKQLATKAARKTPATGGVKKPHR). Lys5 carries the N6-methyllysine modification. Lys10 is modified (N6-acetyllysine; alternate). Lys10 bears the N6-methyllysine; alternate mark. Ser11 is subject to Phosphoserine. The residue at position 12 (Thr12) is a Phosphothreonine. N6-acetyllysine is present on residues Lys15, Lys19, and Lys24. Lys28 is modified (N6-acetyllysine; alternate). Lys28 bears the N6-methyllysine; alternate mark. Residues Lys36 and Lys37 each carry the N6-methyllysine modification.

Belongs to the histone H3 family. As to quaternary structure, the nucleosome is a histone octamer containing two molecules each of H2A, H2B, H3 and H4 assembled in one H3-H4 heterotetramer and two H2A-H2B heterodimers. The octamer wraps approximately 147 bp of DNA. Post-translationally, acetylation is generally linked to gene activation. Acetylated to form H3K9ac (11%), H3K14ac (17%), H3K18ac (11%), H3K23ac (16%) and H3K27ac (7%). H3K4, H3K35 and H3K36 are not acetylated. H3K4me prevents acetylation. 32% of the histone H3 are acetylated with, on average, 2.4 acetyl-Lys. They are all continuously deacatylated and re-acetylated with a half-life of approximately 2 minutes. In terms of processing, monomethylated to form H3K4me1 (81%), H3K9me1 (16%), H3K27me1 (25%), H3K35me1 (25%) and H3K36me1 (5%). No methylation at H3K14, H3K18 and H3K23. Methylated by a protein complex that includes Mut11. Set1 methylates specifically H3K4. H3K4me1 is associated with silenced euchromatin. Set3 forms H3K9me1, while H3K9me2 is undetected. H3K9me1 is specifically associated with silent, multi-copy transgenes. No phosphorylation detected.

The protein localises to the nucleus. It is found in the chromosome. Functionally, core component of nucleosome. Nucleosomes wrap and compact DNA into chromatin, limiting DNA accessibility to the cellular machineries which require DNA as a template. Histones thereby play a central role in transcription regulation, DNA repair, DNA replication and chromosomal stability. DNA accessibility is regulated via a complex set of post-translational modifications of histones, also called histone code, and nucleosome remodeling. The protein is Histone H3 type 3 (ch3-IV) of Chlamydomonas reinhardtii (Chlamydomonas smithii).